We begin with the raw amino-acid sequence, 119 residues long: Large ribosomal subunit protein uL22 (119 aa).

This sequence belongs to the universal ribosomal protein uL22 family. As to quaternary structure, part of the 50S ribosomal subunit.

In terms of biological role, this protein binds specifically to 23S rRNA; its binding is stimulated by other ribosomal proteins, e.g. L4, L17, and L20. It is important during the early stages of 50S assembly. It makes multiple contacts with different domains of the 23S rRNA in the assembled 50S subunit and ribosome. Functionally, the globular domain of the protein is located near the polypeptide exit tunnel on the outside of the subunit, while an extended beta-hairpin is found that lines the wall of the exit tunnel in the center of the 70S ribosome. The sequence is that of Large ribosomal subunit protein uL22 from Bifidobacterium adolescentis (strain ATCC 15703 / DSM 20083 / NCTC 11814 / E194a).